Reading from the N-terminus, the 579-residue chain is V-type ATP synthase alpha chain (579 aa).

227-234 serves as a coordination point for ATP; sequence GGFGTGKT.

It belongs to the ATPase alpha/beta chains family.

It catalyses the reaction ATP + H2O + 4 H(+)(in) = ADP + phosphate + 5 H(+)(out). Produces ATP from ADP in the presence of a proton gradient across the membrane. The V-type alpha chain is a catalytic subunit. This is V-type ATP synthase alpha chain from Anaeromyxobacter dehalogenans (strain 2CP-1 / ATCC BAA-258).